The following is a 93-amino-acid chain: Small ribosomal subunit protein uS19 (93 aa).

It belongs to the universal ribosomal protein uS19 family.

In terms of biological role, protein S19 forms a complex with S13 that binds strongly to the 16S ribosomal RNA. The polypeptide is Small ribosomal subunit protein uS19 (Mycobacterium marinum (strain ATCC BAA-535 / M)).